A 2325-amino-acid chain; its full sequence is Serine/threonine-protein kinase MEC1 (2325 aa).

The FAT domain maps to 1363-1886 (LLTTRSAECD…VWYIFSHARS (524 aa)). Residues 1993 to 2309 (FDDNVNIFFS…QVDVLIQEAT (317 aa)) form the PI3K/PI4K catalytic domain. A G-loop region spans residues 1999-2005 (IFFSLQM). The tract at residues 2174 to 2182 (GLGDRHCEN) is catalytic loop. The interval 2194–2218 (HIDFDCLFEKGTTLPTPEIVPFRLT) is activation loop. In terms of domain architecture, FATC spans 2293 to 2325 (LPMNIHGQVDVLIQEATSLERLSQMYAGWAAYM).

The protein belongs to the PI3/PI4-kinase family. ATM subfamily.

The protein resides in the nucleus. The enzyme catalyses L-seryl-[protein] + ATP = O-phospho-L-seryl-[protein] + ADP + H(+). It carries out the reaction L-threonyl-[protein] + ATP = O-phospho-L-threonyl-[protein] + ADP + H(+). In terms of biological role, serine/threonine protein kinase which activates checkpoint signaling upon genotoxic stresses such as ionizing radiation (IR), ultraviolet light (UV), or DNA replication stalling, thereby acting as a DNA damage sensor. Recognizes the substrate consensus sequence [ST]-Q. Recruited to DNA lesions in order to initiate the DNA repair by homologous recombination. Phosphorylates histone H2A to form H2AS128ph (gamma-H2A) at sites of DNA damage, also involved in the regulation of DNA damage response mechanism. Required for cell growth and meiotic recombination. This Candida albicans (strain SC5314 / ATCC MYA-2876) (Yeast) protein is Serine/threonine-protein kinase MEC1 (MEC1).